We begin with the raw amino-acid sequence, 530 residues long: Bifunctional purine biosynthesis protein PurH (530 aa).

Residues 1–148 (MEQARPIRRA…KNHKDVAIVV (148 aa)) enclose the MGS-like domain.

Belongs to the PurH family.

The enzyme catalyses (6R)-10-formyltetrahydrofolate + 5-amino-1-(5-phospho-beta-D-ribosyl)imidazole-4-carboxamide = 5-formamido-1-(5-phospho-D-ribosyl)imidazole-4-carboxamide + (6S)-5,6,7,8-tetrahydrofolate. It catalyses the reaction IMP + H2O = 5-formamido-1-(5-phospho-D-ribosyl)imidazole-4-carboxamide. It functions in the pathway purine metabolism; IMP biosynthesis via de novo pathway; 5-formamido-1-(5-phospho-D-ribosyl)imidazole-4-carboxamide from 5-amino-1-(5-phospho-D-ribosyl)imidazole-4-carboxamide (10-formyl THF route): step 1/1. It participates in purine metabolism; IMP biosynthesis via de novo pathway; IMP from 5-formamido-1-(5-phospho-D-ribosyl)imidazole-4-carboxamide: step 1/1. The protein is Bifunctional purine biosynthesis protein PurH of Aeromonas hydrophila subsp. hydrophila (strain ATCC 7966 / DSM 30187 / BCRC 13018 / CCUG 14551 / JCM 1027 / KCTC 2358 / NCIMB 9240 / NCTC 8049).